A 349-amino-acid polypeptide reads, in one-letter code: Cytoplasmic tRNA 2-thiolation protein 2 (349 aa).

This sequence belongs to the CTU2/NCS2 family.

The protein localises to the cytoplasm. It functions in the pathway tRNA modification; 5-methoxycarbonylmethyl-2-thiouridine-tRNA biosynthesis. Its function is as follows. Plays a central role in 2-thiolation of mcm(5)S(2)U at tRNA wobble positions of tRNA(Lys), tRNA(Glu) and tRNA(Gln). May act by forming a heterodimer with tut-1/ctu-1 that ligates sulfur from thiocarboxylated urm-1 onto the uridine of tRNAs at wobble position. This Caenorhabditis elegans protein is Cytoplasmic tRNA 2-thiolation protein 2.